A 367-amino-acid polypeptide reads, in one-letter code: Zinc metalloproteinase nas-22 (367 aa).

The N-terminal stretch at 1–16 (MKSFFILLSILQECYG) is a signal peptide. One can recognise a Peptidase M12A domain in the interval 41–237 (VLIRGSDEER…LMINKYYECS (197 aa)). 2 N-linked (GlcNAc...) asparagine glycosylation sites follow: asparagine 56 and asparagine 85. 4 disulfides stabilise this stretch: cysteine 88–cysteine 236, cysteine 111–cysteine 130, cysteine 238–cysteine 258, and cysteine 260–cysteine 269. Histidine 138 contributes to the Zn(2+) binding site. Glutamate 139 is a catalytic residue. 2 residues coordinate Zn(2+): histidine 142 and histidine 148. 3 N-linked (GlcNAc...) asparagine glycosylation sites follow: asparagine 169, asparagine 241, and asparagine 254. The 39-residue stretch at 232–270 (KYYECSCANNLSCKNHGYPNPSNCSQCNCPYGFGGADCS) folds into the EGF-like domain. Asparagine 287 and asparagine 322 each carry an N-linked (GlcNAc...) asparagine glycan.

The cofactor is Zn(2+). In terms of tissue distribution, expressed in uterine seam (utse) cell.

The protein resides in the secreted. Its function is as follows. Metalloprotease. This Caenorhabditis elegans protein is Zinc metalloproteinase nas-22 (nas-22).